Reading from the N-terminus, the 403-residue chain is Chaperone protein DnaJ (403 aa).

A J domain is found at 4–69; sequence DYYEILGVAR…DKRRRYDQFG (66 aa). A CR-type zinc finger spans residues 159 to 240; it reads GVEKTIKIKK…CYGEGIKQGE (82 aa). Zn(2+)-binding residues include Cys-172, Cys-175, Cys-188, Cys-191, Cys-214, Cys-217, Cys-228, and Cys-231. CXXCXGXG motif repeat units lie at residues 172–179, 188–195, 214–221, and 228–235; these read CRECNGTG, CPTCHGSG, CPTCGGEG, and CPSCYGEG.

Belongs to the DnaJ family. As to quaternary structure, homodimer. Requires Zn(2+) as cofactor.

The protein localises to the cytoplasm. Participates actively in the response to hyperosmotic and heat shock by preventing the aggregation of stress-denatured proteins and by disaggregating proteins, also in an autonomous, DnaK-independent fashion. Unfolded proteins bind initially to DnaJ; upon interaction with the DnaJ-bound protein, DnaK hydrolyzes its bound ATP, resulting in the formation of a stable complex. GrpE releases ADP from DnaK; ATP binding to DnaK triggers the release of the substrate protein, thus completing the reaction cycle. Several rounds of ATP-dependent interactions between DnaJ, DnaK and GrpE are required for fully efficient folding. Also involved, together with DnaK and GrpE, in the DNA replication of plasmids through activation of initiation proteins. The polypeptide is Chaperone protein DnaJ (Chlorobaculum tepidum (strain ATCC 49652 / DSM 12025 / NBRC 103806 / TLS) (Chlorobium tepidum)).